The following is a 495-amino-acid chain: Keratin, type II cytoskeletal 74 (495 aa).

Residues 1 to 105 (MASCHTAGHR…DPEIQKVRAQ (105 aa)) form a head region. Positions 106-141 (EREQIKALNDKFASFIDKVRFLEQQNQVLQTKWELL) are coil 1A. Residues 106 to 419 (EREQIKALND…KLLEGEENRM (314 aa)) form the IF rod domain. The interval 142–160 (QQLDLSNCRRNLEPVYEAH) is linker 1. Residues 161–252 (ISNLRKQLEM…CLYDEEISQL (92 aa)) are coil 1B. The interval 253-276 (QTHASETSVILSMDNNRDLDLAGI) is linker 12. The interval 277-415 (IAEVRAHYED…ATYRKLLEGE (139 aa)) is coil 2. Residues 416 to 495 (ENRMSGENPS…AAGTLARKTT (80 aa)) are tail. The disordered stretch occupies residues 449 to 495 (DSEAGNAVGSPSTPRNSQSKTRGSSVDPRDAQDESAAAAGTLARKTT). A compositionally biased stretch (polar residues) spans 457-472 (GSPSTPRNSQSKTRGS).

Belongs to the intermediate filament family. As to quaternary structure, heterotetramer of two type I and two type II keratins. In terms of tissue distribution, expressed in epidermis with a particularly strong staining in the nail matrix, nail bed and hyponychium (at protein level).

In terms of biological role, has a role in hair formation. Specific component of keratin intermediate filaments in the inner root sheath (IRS) of the hair follicle. The sequence is that of Keratin, type II cytoskeletal 74 from Mus musculus (Mouse).